A 34-amino-acid chain; its full sequence is Sperm protein EM1 (34 aa).

Over residues 1 to 17 (AGSKSRSRSRSRSRSKS) the composition is skewed to basic residues. A disordered region spans residues 1–34 (AGSKSRSRSRSRSRSKSPAKSASPKSAASPRASR). Repeat copies occupy residues 3–4 (SK), 5–6 (SR), 7–8 (SR), 9–10 (SR), 11–12 (SR), 13–14 (SR), and 15–16 (SK). Positions 3-16 (SKSRSRSRSRSRSK) are 7 X 2 AA tandem repeats of S-[KR]. Positions 18 to 34 (PAKSASPKSAASPRASR) are enriched in low complexity.

Sperm.

It is found in the nucleus. The chain is Sperm protein EM1 from Ensis minor (Razor shell).